Here is a 397-residue protein sequence, read N- to C-terminus: uncharacterized protein (397 aa).

Transmembrane regions (helical) follow at residues 1–21, 39–59, 76–96, 103–123, 124–144, 194–214, 219–239, 255–275, and 301–321; these read MGASGLVWTLTIVLIAGLMLV, VIQSATFVGIAILFGIAVVVF, EALSVDNLFVFLVIISSFGVP, VLLFGIAFALVTRTGFIFVGA, ALIENFNSAFYLFGLVLLVMA, MMTPLLLVMIAVGGTDILFAF, ALFGLTQNVYLVFAATAFSLL, LVYLSYGLAVILGFIGVKLML, and QSLTVIIIVLLITTAASFWSA.

It belongs to the TerC family.

The protein resides in the cell membrane. This is an uncharacterized protein from Mycobacterium bovis (strain ATCC BAA-935 / AF2122/97).